We begin with the raw amino-acid sequence, 77 residues long: Cell division topological specificity factor (77 aa).

This sequence belongs to the MinE family.

Functionally, prevents the cell division inhibition by proteins MinC and MinD at internal division sites while permitting inhibition at polar sites. This ensures cell division at the proper site by restricting the formation of a division septum at the midpoint of the long axis of the cell. The polypeptide is Cell division topological specificity factor (Helicobacter pylori (strain P12)).